We begin with the raw amino-acid sequence, 204 residues long: Phosphoheptose isomerase (204 aa).

Residues 38–199 enclose the SIS domain; it reads MAVALARGGK…LFEAVMELGP (162 aa). 53–55 serves as a coordination point for substrate; that stretch reads NGG. Residues His62 and Glu66 each coordinate Zn(2+). Substrate contacts are provided by residues Glu66, 95–96, 121–123, Ser126, and Gln172; these read ND and STS. The Zn(2+) site is built by Gln172 and His180.

Belongs to the SIS family. GmhA subfamily. In terms of assembly, homotetramer. Zn(2+) is required as a cofactor.

It is found in the cytoplasm. It carries out the reaction 2 D-sedoheptulose 7-phosphate = D-glycero-alpha-D-manno-heptose 7-phosphate + D-glycero-beta-D-manno-heptose 7-phosphate. It functions in the pathway carbohydrate biosynthesis; D-glycero-D-manno-heptose 7-phosphate biosynthesis; D-glycero-alpha-D-manno-heptose 7-phosphate and D-glycero-beta-D-manno-heptose 7-phosphate from sedoheptulose 7-phosphate: step 1/1. Functionally, catalyzes the isomerization of sedoheptulose 7-phosphate in D-glycero-D-manno-heptose 7-phosphate. In Solidesulfovibrio magneticus (strain ATCC 700980 / DSM 13731 / RS-1) (Desulfovibrio magneticus), this protein is Phosphoheptose isomerase.